The sequence spans 180 residues: Large ribosomal subunit protein uL5 (180 aa).

Belongs to the universal ribosomal protein uL5 family. As to quaternary structure, part of the 50S ribosomal subunit; part of the 5S rRNA/L5/L18/L25 subcomplex. Contacts the 5S rRNA and the P site tRNA. Forms a bridge to the 30S subunit in the 70S ribosome.

Functionally, this is one of the proteins that bind and probably mediate the attachment of the 5S RNA into the large ribosomal subunit, where it forms part of the central protuberance. In the 70S ribosome it contacts protein S13 of the 30S subunit (bridge B1b), connecting the 2 subunits; this bridge is implicated in subunit movement. Contacts the P site tRNA; the 5S rRNA and some of its associated proteins might help stabilize positioning of ribosome-bound tRNAs. This Oenococcus oeni (strain ATCC BAA-331 / PSU-1) protein is Large ribosomal subunit protein uL5.